A 164-amino-acid polypeptide reads, in one-letter code: 3-isopropylmalate dehydratase small subunit 2 (164 aa).

It belongs to the LeuD family. LeuD type 2 subfamily. In terms of assembly, heterodimer of LeuC and LeuD.

It catalyses the reaction (2R,3S)-3-isopropylmalate = (2S)-2-isopropylmalate. It functions in the pathway amino-acid biosynthesis; L-leucine biosynthesis; L-leucine from 3-methyl-2-oxobutanoate: step 2/4. Catalyzes the isomerization between 2-isopropylmalate and 3-isopropylmalate, via the formation of 2-isopropylmaleate. The polypeptide is 3-isopropylmalate dehydratase small subunit 2 (leuD2) (Pyrococcus furiosus (strain ATCC 43587 / DSM 3638 / JCM 8422 / Vc1)).